The chain runs to 330 residues: Ketol-acid reductoisomerase (NADP(+)) (330 aa).

Residues 2–182 form the KARI N-terminal Rossmann domain; it reads VEIYYDDDAS…GGTRAGALRT (181 aa). NADP(+)-binding positions include 25–28, Ser51, and Ser53; that span reads YGSQ. Residue His108 is part of the active site. NADP(+) is bound at residue Gly134. A KARI C-terminal knotted domain is found at 183–328; that stretch reads TFTEETETDL…AKLRPLMSWI (146 aa). Residues Asp191, Glu195, Glu227, and Glu231 each coordinate Mg(2+). Ser252 serves as a coordination point for substrate.

It belongs to the ketol-acid reductoisomerase family. The cofactor is Mg(2+).

The enzyme catalyses (2R)-2,3-dihydroxy-3-methylbutanoate + NADP(+) = (2S)-2-acetolactate + NADPH + H(+). It carries out the reaction (2R,3R)-2,3-dihydroxy-3-methylpentanoate + NADP(+) = (S)-2-ethyl-2-hydroxy-3-oxobutanoate + NADPH + H(+). It participates in amino-acid biosynthesis; L-isoleucine biosynthesis; L-isoleucine from 2-oxobutanoate: step 2/4. Its pathway is amino-acid biosynthesis; L-valine biosynthesis; L-valine from pyruvate: step 2/4. In terms of biological role, involved in the biosynthesis of branched-chain amino acids (BCAA). Catalyzes an alkyl-migration followed by a ketol-acid reduction of (S)-2-acetolactate (S2AL) to yield (R)-2,3-dihydroxy-isovalerate. In the isomerase reaction, S2AL is rearranged via a Mg-dependent methyl migration to produce 3-hydroxy-3-methyl-2-ketobutyrate (HMKB). In the reductase reaction, this 2-ketoacid undergoes a metal-dependent reduction by NADPH to yield (R)-2,3-dihydroxy-isovalerate. This is Ketol-acid reductoisomerase (NADP(+)) from Frankia alni (strain DSM 45986 / CECT 9034 / ACN14a).